Reading from the N-terminus, the 483-residue chain is Proton-coupled amino acid transporter 2 (483 aa).

Residues 1-58 (MSVTKSTEGPQGAVAIKLDLMSPPESAKKLENKDSTFLDESPSESAGLKKTKGITVFQ) lie on the Cytoplasmic side of the membrane. Basic and acidic residues predominate over residues 26–36 (SAKKLENKDST). Residues 26 to 46 (SAKKLENKDSTFLDESPSESA) form a disordered region. The chain crosses the membrane as a helical span at residues 59 to 79 (ALIHLVKGNMGTGILGLPLAV). Over 80–81 (KN) the chain is Extracellular. The chain crosses the membrane as a helical span at residues 82 to 102 (AGILMGPLSLLVMGFIACHCM). Over 103–148 (HILVKCAQRFCKRLNKPFMDYGDTVMHGLEANPNAWLQNHAHWGRH) the chain is Cytoplasmic. The helical transmembrane segment at 149–169 (IVSFFLIITQLGFCCVYIVFL) threads the bilayer. The Extracellular segment spans residues 170 to 197 (ADNLKQVVEAVNSTTNNCYSNETVILTP). A helical membrane pass occupies residues 198–218 (TMDSRLYMLSFLPFLVLLVLI). Topologically, residues 219-222 (RNLR) are cytoplasmic. A helical transmembrane segment spans residues 223–243 (ILTIFSMLANISMLVSLVIII). Residues 244 to 264 (QYITQEIPDPSRLPLVASWKT) are Extracellular-facing. Residues 265–285 (YPLFFGTAIFSFESIGVVLPL) form a helical membrane-spanning segment. Residues 286–296 (ENKMKNARHFP) lie on the Cytoplasmic side of the membrane. Residues 297-317 (AILSLGMSIVTSLYIGMAALG) form a helical membrane-spanning segment. Topologically, residues 318–349 (YLRFGDDIKASISLNLPNCWLYQSVKLLYIAG) are extracellular. The helical transmembrane segment at 350–370 (ILCTYALQFYVPAEIIIPFAI) threads the bilayer. Residues 371–379 (SRVSTRWAL) lie on the Cytoplasmic side of the membrane. Residues 380 to 400 (PLDLSIRLVMVCLTCLLAILI) form a helical membrane-spanning segment. At 401-404 (PRLD) the chain is on the extracellular side. Residues 405 to 425 (LVISLVGSVSGTALALIIPPL) traverse the membrane as a helical segment. The Cytoplasmic portion of the chain corresponds to 426–437 (LEVTTFYSEGMS). A helical membrane pass occupies residues 438 to 458 (PLTIFKDALISILGFVGFVVG). The Extracellular portion of the chain corresponds to 459-483 (TYQALDELLKSEDSHPFSNSTTFVR).

This sequence belongs to the amino acid/polyamine transporter 2 family. Abundantly expressed in kidney and muscle. Expressed in the S1 segment of the proximal tubule close to the glomerulus.

The protein resides in the cell membrane. Its subcellular location is the endoplasmic reticulum membrane. It localises to the recycling endosome membrane. It carries out the reaction glycine(in) + H(+)(in) = glycine(out) + H(+)(out). The catalysed reaction is L-alanine(in) + H(+)(in) = L-alanine(out) + H(+)(out). It catalyses the reaction D-alanine(in) + H(+)(in) = D-alanine(out) + H(+)(out). The enzyme catalyses L-proline(out) + H(+)(out) = L-proline(in) + H(+)(in). It carries out the reaction D-proline(out) + H(+)(out) = D-proline(in) + H(+)(in). The catalysed reaction is 4-hydroxy-L-proline(in) + H(+)(in) = 4-hydroxy-L-proline(out) + H(+)(out). It catalyses the reaction L-serine(in) + H(+)(in) = L-serine(out) + H(+)(out). The enzyme catalyses D-serine(out) + H(+)(out) = D-serine(in) + H(+)(in). It carries out the reaction beta-alanine(in) + H(+)(in) = beta-alanine(out) + H(+)(out). The catalysed reaction is 4-aminobutanoate(in) + H(+)(in) = 4-aminobutanoate(out) + H(+)(out). It catalyses the reaction sarcosine(in) + H(+)(in) = sarcosine(out) + H(+)(out). The enzyme catalyses N,N-dimethylglycine(in) + H(+)(in) = N,N-dimethylglycine(out) + H(+)(out). In terms of biological role, electrogenic proton/amino acid symporter with a high selectivity for the small side chains amino acids glycine, alanine and proline, where both L- and D-enantiomers are transported. Extension of the backbone length, as in beta-alanine and 4-aminobutanoate or methylation of the amino group, as in sarcosine and N,N-dimethylglycine, are also tolerated but decrease transport efficiency. A free carboxyl group is preferred. The protein is Proton-coupled amino acid transporter 2 of Homo sapiens (Human).